We begin with the raw amino-acid sequence, 739 residues long: Polyribonucleotide nucleotidyltransferase (739 aa).

Residues aspartate 488 and aspartate 494 each contribute to the Mg(2+) site. One can recognise a KH domain in the interval 555-614 (PKIVTLKINPDKIRDVIGPGGKVINGIIDETGVKIDIDQDGTVFIASTDQDGINHARQLI). The S1 motif domain maps to 624–692 (GEEFDGTVRR…DKGRVNASHK (69 aa)). The tract at residues 698-739 (GMSPEDRAAYDEKKKTERDSRPPRRDTGSRPPRDGQRPPRRN) is disordered. Residues 701 to 739 (PEDRAAYDEKKKTERDSRPPRRDTGSRPPRDGQRPPRRN) show a composition bias toward basic and acidic residues.

The protein belongs to the polyribonucleotide nucleotidyltransferase family. The cofactor is Mg(2+).

The protein localises to the cytoplasm. It catalyses the reaction RNA(n+1) + phosphate = RNA(n) + a ribonucleoside 5'-diphosphate. In terms of biological role, involved in mRNA degradation. Catalyzes the phosphorolysis of single-stranded polyribonucleotides processively in the 3'- to 5'-direction. The chain is Polyribonucleotide nucleotidyltransferase from Exiguobacterium sibiricum (strain DSM 17290 / CCUG 55495 / CIP 109462 / JCM 13490 / 255-15).